We begin with the raw amino-acid sequence, 161 residues long: Nucleotide-binding protein Tcr_1902 (161 aa).

This sequence belongs to the YajQ family.

Nucleotide-binding protein. The sequence is that of Nucleotide-binding protein Tcr_1902 from Hydrogenovibrio crunogenus (strain DSM 25203 / XCL-2) (Thiomicrospira crunogena).